Here is a 116-residue protein sequence, read N- to C-terminus: Large ribosomal subunit protein bL19 (116 aa).

The protein belongs to the bacterial ribosomal protein bL19 family.

In terms of biological role, this protein is located at the 30S-50S ribosomal subunit interface and may play a role in the structure and function of the aminoacyl-tRNA binding site. The polypeptide is Large ribosomal subunit protein bL19 (Clostridium botulinum (strain Eklund 17B / Type B)).